Consider the following 178-residue polypeptide: ATP-dependent protease subunit HslV (178 aa).

Threonine 7 is a catalytic residue. 3 residues coordinate Na(+): glycine 162, cysteine 165, and threonine 168.

Belongs to the peptidase T1B family. HslV subfamily. In terms of assembly, a double ring-shaped homohexamer of HslV is capped on each side by a ring-shaped HslU homohexamer. The assembly of the HslU/HslV complex is dependent on binding of ATP.

The protein resides in the cytoplasm. The enzyme catalyses ATP-dependent cleavage of peptide bonds with broad specificity.. Its activity is regulated as follows. Allosterically activated by HslU binding. Protease subunit of a proteasome-like degradation complex believed to be a general protein degrading machinery. The protein is ATP-dependent protease subunit HslV of Burkholderia ambifaria (strain MC40-6).